The chain runs to 230 residues: Large ribosomal subunit protein uL1 (230 aa).

It belongs to the universal ribosomal protein uL1 family. Part of the 50S ribosomal subunit.

Its function is as follows. Binds directly to 23S rRNA. The L1 stalk is quite mobile in the ribosome, and is involved in E site tRNA release. In terms of biological role, protein L1 is also a translational repressor protein, it controls the translation of the L11 operon by binding to its mRNA. The chain is Large ribosomal subunit protein uL1 from Bacillus cereus (strain G9842).